A 312-amino-acid polypeptide reads, in one-letter code: MTRAGILGIGSYVGEHVVTNKDFEKRIDTSDEWIRTRTGIEERRFAPDNVDTSDMAYEASVKALKAAGVSAEEIDLILVATVTPDMPFPTVSTLVQQRLGAKKAAAMDISAACAGFIYGLATGQQFIENGGYKHVLVIGVEKLSKITDMTDRNTAVLFGDGAGAAVMGAVSEDRGILAYELGADGEGAMHINQKGEYIQMNGREVFKFAVRQMGESALSVLEKAGLSKEDVDFLIPHQANIRIMEASRERLELPVEKMSTTVKKYGNTSSASIPMAMVDELKDGKIKDGDLLVLVGFGAGLVWGSLALRWGR.

Residues C113 and H237 contribute to the active site. An ACP-binding region spans residues 238 to 242; sequence QANIR. Residue N267 is part of the active site.

It belongs to the thiolase-like superfamily. FabH family. Homodimer.

It localises to the cytoplasm. It catalyses the reaction malonyl-[ACP] + acetyl-CoA + H(+) = 3-oxobutanoyl-[ACP] + CO2 + CoA. Its pathway is lipid metabolism; fatty acid biosynthesis. Functionally, catalyzes the condensation reaction of fatty acid synthesis by the addition to an acyl acceptor of two carbons from malonyl-ACP. Catalyzes the first condensation reaction which initiates fatty acid synthesis and may therefore play a role in governing the total rate of fatty acid production. Possesses both acetoacetyl-ACP synthase and acetyl transacylase activities. Its substrate specificity determines the biosynthesis of branched-chain and/or straight-chain of fatty acids. This Halalkalibacterium halodurans (strain ATCC BAA-125 / DSM 18197 / FERM 7344 / JCM 9153 / C-125) (Bacillus halodurans) protein is Beta-ketoacyl-[acyl-carrier-protein] synthase III 1.